Consider the following 361-residue polypeptide: Ankyrin repeat domain-containing protein 16 (361 aa).

9 ANK repeats span residues 36-66 (AGDT…DIEA), 70-99 (DYKR…VVDS), 103-132 (ADWT…NPLL), 136-165 (DGWN…DAWK), 170-200 (IRRT…EPDC), 204-233 (CGVT…ACSS), 238-268 (MGAQ…DVDV), 273-302 (SQLT…DINS), and 306-335 (RNRS…KDSE).

In terms of assembly, interacts with AARS; the interaction is direct. Widely expressed in brain (at protein level).

The protein localises to the cytoplasm. It is found in the nucleus. Functionally, required to prevent the misactivation of serine (Ser) with tRNA(Ala) by promoting the hydrolysis of Ser-mischarged tRNA(Ala), thereby playing a role in translational fidelity. Binds directly to the catalytic domain of AARS/AlaRS and captures Ser that is misactivated by AARS/AlaRS, preventing the charging of Ser adenylates to tRNA(Ala) and precluding Ser misincorporation in nascent peptides. The polypeptide is Ankyrin repeat domain-containing protein 16 (Mus musculus (Mouse)).